The primary structure comprises 310 residues: Ribosomal RNA small subunit methyltransferase H (310 aa).

S-adenosyl-L-methionine-binding positions include 32-34, Asp-52, Phe-79, Asp-100, and Gln-107; that span reads GGH.

Belongs to the methyltransferase superfamily. RsmH family.

The protein resides in the cytoplasm. The catalysed reaction is cytidine(1402) in 16S rRNA + S-adenosyl-L-methionine = N(4)-methylcytidine(1402) in 16S rRNA + S-adenosyl-L-homocysteine + H(+). Its function is as follows. Specifically methylates the N4 position of cytidine in position 1402 (C1402) of 16S rRNA. In Bacillus cereus (strain AH187), this protein is Ribosomal RNA small subunit methyltransferase H.